Consider the following 463-residue polypeptide: Ammonium transporter 1 (463 aa).

Topologically, residues 1 to 39 are extracellular; it reads MVAGEIIKGVAAEITNGSSSSVVQKYLDCANQVAPDPGN. A helical transmembrane segment spans residues 40 to 60; it reads TTWVLLSTILVLGMMPALAFF. Residues 61 to 76 are Cytoplasmic-facing; the sequence is EAGLLRSKNTLSIITQ. The chain crosses the membrane as a helical span at residues 77-97; the sequence is IMSGIVVLTVMWQAFGYSLTF. Residues 98 to 127 are Extracellular-facing; the sequence is GPDQKGIIGNLDHAFLINVSYDDCSPNAPN. A helical transmembrane segment spans residues 128 to 148; the sequence is IPAAAYAFFMMMFANITPLLM. Over 149–160 the chain is Cytoplasmic; that stretch reads TGAFAERVKFKA. The helical transmembrane segment at 161–181 threads the bilayer; sequence FIALTVAWEIIVFYPVAHWIW. Residues 182 to 194 are Extracellular-facing; sequence GGGWLHKYFGVLD. A helical membrane pass occupies residues 195–215; that stretch reads FAGGIVIHTSAGVSALVIALY. Residues 216–233 are Cytoplasmic-facing; the sequence is VGRRKDFEKYGGEFPPSN. The chain crosses the membrane as a helical span at residues 234–254; that stretch reads LPLATIGAALLWMGWFGFNAG. The Extracellular portion of the chain corresponds to 255–265; that stretch reads SALAAGNIATS. Residues 266-286 form a helical membrane-spanning segment; it reads AVASTQIGGSFSAIVWIILSA. Over 287 to 293 the chain is Cytoplasmic; the sequence is AKGKPNT. Residues 294 to 314 form a helical membrane-spanning segment; sequence VSVINGVIAGLAGITPASGYI. Topologically, residues 315–316 are extracellular; that stretch reads NS. Residues 317–337 form a helical membrane-spanning segment; it reads QYSIGLGICLGLASYYSVVLL. At 338–351 the chain is on the cytoplasmic side; the sequence is KHKLHIDDALDVSS. The chain crosses the membrane as a helical span at residues 352 to 372; that stretch reads VHGLTGIIGSLAIGFCAELSV. At 373 to 392 the chain is on the extracellular side; the sequence is NPNGANGAFYGNPKLIGTQL. The chain crosses the membrane as a helical span at residues 393-413; it reads LGVVSVAVWAAAWTWVLLKII. The Cytoplasmic segment spans residues 414-463; it reads DATIGVKIDESEEELGLDLVEHGEFAYHNISLQGNENHYSSVINSHDFFK.

It belongs to the ammonia transporter channel (TC 1.A.11.2) family.

Its subcellular location is the cell membrane. It is found in the endosome membrane. The protein resides in the lysosome membrane. The protein localises to the cytoplasmic vesicle. It localises to the phagosome membrane. Functionally, ammonium transporter that mediates the excretion of ammonium. Controls ammonium homeostasis during growth and development. Ammonium has been shown to function as a morphogen at multiple steps during the development. The sequence is that of Ammonium transporter 1 (amtA) from Dictyostelium discoideum (Social amoeba).